Reading from the N-terminus, the 217-residue chain is Thiamine-phosphate synthase (217 aa).

4-amino-2-methyl-5-(diphosphooxymethyl)pyrimidine is bound by residues 44-48 (QYREK) and asparagine 76. The Mg(2+) site is built by aspartate 77 and aspartate 96. Serine 115 is a binding site for 4-amino-2-methyl-5-(diphosphooxymethyl)pyrimidine. Residue 141-143 (TKT) coordinates 2-[(2R,5Z)-2-carboxy-4-methylthiazol-5(2H)-ylidene]ethyl phosphate. Lysine 144 contacts 4-amino-2-methyl-5-(diphosphooxymethyl)pyrimidine. 2-[(2R,5Z)-2-carboxy-4-methylthiazol-5(2H)-ylidene]ethyl phosphate contacts are provided by residues glycine 172 and 192-193 (VS).

Belongs to the thiamine-phosphate synthase family. Requires Mg(2+) as cofactor.

It catalyses the reaction 2-[(2R,5Z)-2-carboxy-4-methylthiazol-5(2H)-ylidene]ethyl phosphate + 4-amino-2-methyl-5-(diphosphooxymethyl)pyrimidine + 2 H(+) = thiamine phosphate + CO2 + diphosphate. It carries out the reaction 2-(2-carboxy-4-methylthiazol-5-yl)ethyl phosphate + 4-amino-2-methyl-5-(diphosphooxymethyl)pyrimidine + 2 H(+) = thiamine phosphate + CO2 + diphosphate. The catalysed reaction is 4-methyl-5-(2-phosphooxyethyl)-thiazole + 4-amino-2-methyl-5-(diphosphooxymethyl)pyrimidine + H(+) = thiamine phosphate + diphosphate. The protein operates within cofactor biosynthesis; thiamine diphosphate biosynthesis; thiamine phosphate from 4-amino-2-methyl-5-diphosphomethylpyrimidine and 4-methyl-5-(2-phosphoethyl)-thiazole: step 1/1. Condenses 4-methyl-5-(beta-hydroxyethyl)thiazole monophosphate (THZ-P) and 2-methyl-4-amino-5-hydroxymethyl pyrimidine pyrophosphate (HMP-PP) to form thiamine monophosphate (TMP). The protein is Thiamine-phosphate synthase of Lawsonia intracellularis (strain PHE/MN1-00).